A 180-amino-acid chain; its full sequence is Acireductone dioxygenase (180 aa).

Fe(2+) contacts are provided by H96, H98, E102, and H140. Ni(2+) is bound by residues H96, H98, E102, and H140.

It belongs to the acireductone dioxygenase (ARD) family. Monomer. Requires Fe(2+) as cofactor. Ni(2+) is required as a cofactor.

The enzyme catalyses 1,2-dihydroxy-5-(methylsulfanyl)pent-1-en-3-one + O2 = 3-(methylsulfanyl)propanoate + CO + formate + 2 H(+). It catalyses the reaction 1,2-dihydroxy-5-(methylsulfanyl)pent-1-en-3-one + O2 = 4-methylsulfanyl-2-oxobutanoate + formate + 2 H(+). It functions in the pathway amino-acid biosynthesis; L-methionine biosynthesis via salvage pathway; L-methionine from S-methyl-5-thio-alpha-D-ribose 1-phosphate: step 5/6. Functionally, catalyzes 2 different reactions between oxygen and the acireductone 1,2-dihydroxy-3-keto-5-methylthiopentene (DHK-MTPene) depending upon the metal bound in the active site. Fe-containing acireductone dioxygenase (Fe-ARD) produces formate and 2-keto-4-methylthiobutyrate (KMTB), the alpha-ketoacid precursor of methionine in the methionine recycle pathway. Ni-containing acireductone dioxygenase (Ni-ARD) produces methylthiopropionate, carbon monoxide and formate, and does not lie on the methionine recycle pathway. This chain is Acireductone dioxygenase, found in Synechococcus sp. (strain WH7803).